The sequence spans 1080 residues: Carbamoyl phosphate synthase large chain (1080 aa).

Positions 1 to 403 are carboxyphosphate synthetic domain; sequence MPKRTDLRTI…SLQKAVRGLE (403 aa). The ATP site is built by Arg-129, Arg-169, Gly-175, Gly-176, Glu-208, Val-210, Glu-215, Gly-241, Val-242, His-243, Gln-285, and Glu-299. An ATP-grasp 1 domain is found at 133-328; it reads RVAMQEIGLE…IAKIAAKLAV (196 aa). Mg(2+)-binding residues include Gln-285, Glu-299, and Asn-301. Residues Gln-285, Glu-299, and Asn-301 each contribute to the Mn(2+) site. The tract at residues 404–554 is oligomerization domain; that stretch reads TGKVGLEPTG…YSTYEEECEA (151 aa). The tract at residues 555–942 is carbamoyl phosphate synthetic domain; it reads APSDRRKIMI…AFARAQEAGD (388 aa). Residues 679 to 876 enclose the ATP-grasp 2 domain; it reads QKLVQQLGLR…LAKIAARCMT (198 aa). 10 residues coordinate ATP: Arg-715, Arg-754, Leu-756, Glu-761, Gly-787, Val-788, His-789, Ser-790, Gln-830, and Glu-847. Residues Gln-830, Glu-847, and Asn-849 each coordinate Mg(2+). Mn(2+) is bound by residues Gln-830, Glu-847, and Asn-849. The MGS-like domain occupies 943–1080; sequence IRAPQPGRAF…LQELHKELQV (138 aa). The allosteric domain stretch occupies residues 943–1080; the sequence is IRAPQPGRAF…LQELHKELQV (138 aa).

It belongs to the CarB family. As to quaternary structure, composed of two chains; the small (or glutamine) chain promotes the hydrolysis of glutamine to ammonia, which is used by the large (or ammonia) chain to synthesize carbamoyl phosphate. Tetramer of heterodimers (alpha,beta)4. Mg(2+) is required as a cofactor. It depends on Mn(2+) as a cofactor.

It catalyses the reaction hydrogencarbonate + L-glutamine + 2 ATP + H2O = carbamoyl phosphate + L-glutamate + 2 ADP + phosphate + 2 H(+). It carries out the reaction hydrogencarbonate + NH4(+) + 2 ATP = carbamoyl phosphate + 2 ADP + phosphate + 2 H(+). It functions in the pathway amino-acid biosynthesis; L-arginine biosynthesis; carbamoyl phosphate from bicarbonate: step 1/1. The protein operates within pyrimidine metabolism; UMP biosynthesis via de novo pathway; (S)-dihydroorotate from bicarbonate: step 1/3. Large subunit of the glutamine-dependent carbamoyl phosphate synthetase (CPSase). CPSase catalyzes the formation of carbamoyl phosphate from the ammonia moiety of glutamine, carbonate, and phosphate donated by ATP, constituting the first step of 2 biosynthetic pathways, one leading to arginine and/or urea and the other to pyrimidine nucleotides. The large subunit (synthetase) binds the substrates ammonia (free or transferred from glutamine from the small subunit), hydrogencarbonate and ATP and carries out an ATP-coupled ligase reaction, activating hydrogencarbonate by forming carboxy phosphate which reacts with ammonia to form carbamoyl phosphate. This Xylella fastidiosa (strain 9a5c) protein is Carbamoyl phosphate synthase large chain.